The sequence spans 293 residues: L-ornithine N(alpha)-acyltransferase (293 aa).

It belongs to the acetyltransferase family. OlsB subfamily.

The enzyme catalyses a (3R)-hydroxyacyl-[ACP] + L-ornithine = a lyso-ornithine lipid + holo-[ACP] + H(+). The protein operates within lipid metabolism. Catalyzes the first step in the biosynthesis of ornithine lipids, which are phosphorus-free membrane lipids. Catalyzes the 3-hydroxyacyl-acyl carrier protein-dependent acylation of ornithine to form lyso-ornithine lipid (LOL). In Agrobacterium fabrum (strain C58 / ATCC 33970) (Agrobacterium tumefaciens (strain C58)), this protein is L-ornithine N(alpha)-acyltransferase.